An 888-amino-acid polypeptide reads, in one-letter code: Glutamate receptor 3 (888 aa).

The signal sequence occupies residues 1–22 (MGQSVLRAVFFLVLGLLGHSHG). Residues 23–546 (GFPNTISIGG…GVFSFLDPLA (524 aa)) lie on the Extracellular side of the membrane. Residues N57, N260, N374, N409, and N416 are each glycosylated (N-linked (GlcNAc...) asparagine). C85 and C334 are joined by a disulfide. L-glutamate contacts are provided by P502, T504, and R509. Residues 547–567 (YEIWMCIVFAYIGVSVVLFLV) traverse the membrane as a helical segment. Topologically, residues 568 to 596 (SRFSPYEWHLEDNNEEPRDPQSPPDPPNE) are cytoplasmic. Positions 597–612 (FGIFNSLWFSLGAFMQ) form an intramembrane region, helical; Pore-forming. Residues 613–615 (QGC) lie within the membrane without spanning it. A lipid anchor (S-palmitoyl cysteine) is attached at C615. Residues 616 to 621 (DISPRS) are Cytoplasmic-facing. A helical transmembrane segment spans residues 622–642 (LSGRIVGGVWWFFTLIIISSY). The Extracellular portion of the chain corresponds to 643–817 (TANLAAFLTV…DKTSALSLSN (175 aa)). 3 residues coordinate L-glutamate: S680, T681, and E731. C744 and C799 are joined by a disulfide. A helical membrane pass occupies residues 818-838 (VAGVFYILVGGLGLAMMVALI). Over 839–888 (EFCYKSRAESKRMKLTKNTQNFKPAPATNTQNYATYREGYNVYGTESVKI) the chain is Cytoplasmic. A lipid anchor (S-palmitoyl cysteine) is attached at C841. Residues Y871 and Y881 each carry the phosphotyrosine modification.

Belongs to the glutamate-gated ion channel (TC 1.A.10.1) family. GRIA3 subfamily. As to quaternary structure, homotetramer or heterotetramer of pore-forming glutamate receptor subunits. Tetramers may be formed by the dimerization of dimers. Interacts with PICK1, GRIP1 and GRIP2. Found in a complex with GRIA1, GRIA2, GRIA4, CNIH2, CNIH3, CACNG2, CACNG3, CACNG4, CACNG5, CACNG7 and CACNG8. Interacts with CACNG5. Found in a complex with GRIA1, GRIA2, GRIA4, DLG4, CACNG8 and CNIH2.

Its subcellular location is the cell membrane. The protein localises to the postsynaptic cell membrane. It is found in the postsynaptic density membrane. The catalysed reaction is Ca(2+)(in) = Ca(2+)(out). Ionotropic glutamate receptor that functions as a ligand-gated cation channel, gated by L-glutamate and glutamatergic agonists such as alpha-amino-3-hydroxy-5-methyl-4-isoxazolepropionic acid (AMPA), quisqualic acid, and kainic acid. L-glutamate acts as an excitatory neurotransmitter at many synapses in the central nervous system and plays an important role in fast excitatory synaptic transmission by inducing long-term potentiation. Binding of the excitatory neurotransmitter L-glutamate induces a conformation change, leading to the opening of the cation channel, and thereby converts the chemical signal to an electrical impulse upon entry of calcium. The receptor then desensitizes rapidly and enters a transient inactive state, characterized by the presence of bound agonist. In the presence of CACNG8, shows resensitization which is characterized by a delayed accumulation of current flux upon continued application of glutamate. The protein is Glutamate receptor 3 of Rattus norvegicus (Rat).